We begin with the raw amino-acid sequence, 363 residues long: NAD(P)H-quinone oxidoreductase subunit 1, chloroplastic (363 aa).

Transmembrane regions (helical) follow at residues 30 to 50, 104 to 124, 129 to 149, 248 to 268, 269 to 289, 300 to 320, and 336 to 356; these read FIPI…IVWL, IAVI…HLVL, IGVF…LMSG, YSGI…LVSS, LFVT…IFVF, VFEP…FLFI, and LLNL…LLTT.

It belongs to the complex I subunit 1 family. As to quaternary structure, NDH is composed of at least 16 different subunits, 5 of which are encoded in the nucleus.

It localises to the plastid. The protein localises to the chloroplast thylakoid membrane. It carries out the reaction a plastoquinone + NADH + (n+1) H(+)(in) = a plastoquinol + NAD(+) + n H(+)(out). The enzyme catalyses a plastoquinone + NADPH + (n+1) H(+)(in) = a plastoquinol + NADP(+) + n H(+)(out). Its function is as follows. NDH shuttles electrons from NAD(P)H:plastoquinone, via FMN and iron-sulfur (Fe-S) centers, to quinones in the photosynthetic chain and possibly in a chloroplast respiratory chain. The immediate electron acceptor for the enzyme in this species is believed to be plastoquinone. Couples the redox reaction to proton translocation, and thus conserves the redox energy in a proton gradient. This is NAD(P)H-quinone oxidoreductase subunit 1, chloroplastic from Morus indica (Mulberry).